A 387-amino-acid chain; its full sequence is Protein NDRG3 (387 aa).

Residues 329-387 form a disordered region; sequence PSASMTRLVRSRTHSASSSGSMEMPRSRSHTSNAQLQSTSNNSLSNQIQETPHTIELSC. A compositionally biased stretch (low complexity) spans 359-377; sequence TSNAQLQSTSNNSLSNQIQ.

The protein belongs to the NDRG family.

This chain is Protein NDRG3, found in Xenopus tropicalis (Western clawed frog).